A 95-amino-acid polypeptide reads, in one-letter code: Antitoxin TacA1 (95 aa).

The interval 59–95 (FNFNDEQYEEFINLLDAPVADDPVIEKLLARKPQWDV) is neutralization domain.

It belongs to the TacA antitoxin family. In terms of assembly, homodimer. Forms a complex with cognate toxin TacT1. Forms a 4:2 antitoxin:toxin complex with cognate toxin TacT1.

Its function is as follows. Antitoxin component of a type II toxin-antitoxin (TA) system. Counteracts the toxic effect of cognate toxin TacT1 (T8), but not TacT2 or TacT3. Plays a role in persister cell formation. In terms of biological role, the TacA1-TacT1 complex binds (and probably represses) its own promoter DNA but not that of tacA3-tacT3, it does not repress the tacA3-tacT3 promoter. The sequence is that of Antitoxin TacA1 from Salmonella typhimurium (strain 14028s / SGSC 2262).